The sequence spans 414 residues: Carbohydrate sulfotransferase 12 (414 aa).

Residues 1–5 (MTKAR) lie on the Cytoplasmic side of the membrane. Residues 6 to 26 (LFRLWLVLGSVFMILLIIVYW) traverse the membrane as a helical; Signal-anchor for type II membrane protein segment. The Lumenal portion of the chain corresponds to 27–414 (DSAGAAHFYL…YPKPENLLRD (388 aa)). Residues 80–125 (QSDLPRKETEQPPAPGSMEESVRGYDWSPRDARRSPDQGRQQAERR) form a disordered region. Positions 99–125 (ESVRGYDWSPRDARRSPDQGRQQAERR) are enriched in basic and acidic residues. N-linked (GlcNAc...) asparagine glycosylation occurs at Asn-134. 171-177 (PKVACTN) contacts 3'-phosphoadenylyl sulfate. N-linked (GlcNAc...) asparagine glycosylation occurs at Asn-209. A 3'-phosphoadenylyl sulfate-binding site is contributed by 245–253 (RDPFVRLIS). Residues Asn-280 and Asn-370 are each glycosylated (N-linked (GlcNAc...) asparagine).

It belongs to the sulfotransferase 2 family. Widely expressed. Expressed a high level in spinal chord, heart, spleen, thyroid, pituitary gland, adrenal gland, peripheral blood leukocytes, thymus, lung, small intestine, fetal kidney, fetal spleen and fetal lung.

It localises to the golgi apparatus membrane. It catalyses the reaction chondroitin beta-D-glucuronate + n 3'-phosphoadenylyl sulfate = chondroitin 4'-sulfate + n adenosine 3',5'-bisphosphate + n H(+). In terms of biological role, catalyzes the transfer of sulfate to position 4 of the N-acetylgalactosamine (GalNAc) residue of chondroitin and desulfated dermatan sulfate. Chondroitin sulfate constitutes the predominant proteoglycan present in cartilage and is distributed on the surfaces of many cells and extracellular matrices. Activity toward partially desulfated dermatan sulfate is however lower. Does not form 4, 6-di-O-sulfated GalNAc when chondroitin sulfate C is used as an acceptor. In Homo sapiens (Human), this protein is Carbohydrate sulfotransferase 12 (CHST12).